A 232-amino-acid polypeptide reads, in one-letter code: 5'-methylthioadenosine/S-adenosylhomocysteine nucleosidase (232 aa).

The active-site Proton acceptor is glutamate 12. Substrate-binding positions include glycine 78, valine 152, and 173 to 174 (ME). Catalysis depends on aspartate 197, which acts as the Proton donor.

Belongs to the PNP/UDP phosphorylase family. MtnN subfamily. As to quaternary structure, homodimer.

The enzyme catalyses S-adenosyl-L-homocysteine + H2O = S-(5-deoxy-D-ribos-5-yl)-L-homocysteine + adenine. The catalysed reaction is S-methyl-5'-thioadenosine + H2O = 5-(methylsulfanyl)-D-ribose + adenine. It carries out the reaction 5'-deoxyadenosine + H2O = 5-deoxy-D-ribose + adenine. It participates in amino-acid biosynthesis; L-methionine biosynthesis via salvage pathway; S-methyl-5-thio-alpha-D-ribose 1-phosphate from S-methyl-5'-thioadenosine (hydrolase route): step 1/2. In terms of biological role, catalyzes the irreversible cleavage of the glycosidic bond in both 5'-methylthioadenosine (MTA) and S-adenosylhomocysteine (SAH/AdoHcy) to adenine and the corresponding thioribose, 5'-methylthioribose and S-ribosylhomocysteine, respectively. Also cleaves 5'-deoxyadenosine, a toxic by-product of radical S-adenosylmethionine (SAM) enzymes, into 5-deoxyribose and adenine. Thus, is required for in vivo function of the radical SAM enzymes biotin synthase and lipoic acid synthase, that are inhibited by 5'-deoxyadenosine accumulation. The polypeptide is 5'-methylthioadenosine/S-adenosylhomocysteine nucleosidase (Buchnera aphidicola subsp. Acyrthosiphon pisum (strain APS) (Acyrthosiphon pisum symbiotic bacterium)).